The primary structure comprises 365 residues: Peptide chain release factor 2 (365 aa).

An N5-methylglutamine modification is found at Gln-251.

It belongs to the prokaryotic/mitochondrial release factor family. Post-translationally, methylated by PrmC. Methylation increases the termination efficiency of RF2.

Its subcellular location is the cytoplasm. In terms of biological role, peptide chain release factor 2 directs the termination of translation in response to the peptide chain termination codons UGA and UAA. The sequence is that of Peptide chain release factor 2 from Aliarcobacter butzleri (strain RM4018) (Arcobacter butzleri).